Here is a 202-residue protein sequence, read N- to C-terminus: Peptidyl-tRNA hydrolase (202 aa).

A tRNA-binding site is contributed by Y19. H24 functions as the Proton acceptor in the catalytic mechanism. Residues Y70, N72, and N118 each coordinate tRNA.

It belongs to the PTH family. In terms of assembly, monomer.

Its subcellular location is the cytoplasm. The enzyme catalyses an N-acyl-L-alpha-aminoacyl-tRNA + H2O = an N-acyl-L-amino acid + a tRNA + H(+). Functionally, hydrolyzes ribosome-free peptidyl-tRNAs (with 1 or more amino acids incorporated), which drop off the ribosome during protein synthesis, or as a result of ribosome stalling. Catalyzes the release of premature peptidyl moieties from peptidyl-tRNA molecules trapped in stalled 50S ribosomal subunits, and thus maintains levels of free tRNAs and 50S ribosomes. The protein is Peptidyl-tRNA hydrolase of Prochlorococcus marinus (strain NATL2A).